A 128-amino-acid polypeptide reads, in one-letter code: MYDNLKSLGITNPDEIDRYSLRQEANNDILKIYFQKDKGEFFAKSVKFKYPRQRKTVVADGVGQGYKEVQEISPNLRYVIDELDQICQRDRTEIDLKRKILDDLRHLESVVTNKISEIEADLEKLTRK.

It belongs to the UPF0325 family.

The protein is UPF0325 protein KPN78578_01770 of Klebsiella pneumoniae subsp. pneumoniae (strain ATCC 700721 / MGH 78578).